The sequence spans 187 residues: Cerebral dopamine neurotrophic factor (187 aa).

A signal peptide spans 1–24 (MRCTSPAALVTFCAGLWISNHVLA). Intrachain disulfides connect Cys-37–Cys-124, Cys-40–Cys-113, and Cys-71–Cys-82.

It belongs to the ARMET family.

It is found in the secreted. Functionally, trophic factor for dopamine neurons. Prevents the 6-hydroxydopamine (6-OHDA)-induced degeneration of dopaminergic neurons. When administered after 6-OHDA-lesioning, restores the dopaminergic function and prevents the degeneration of dopaminergic neurons in substantia nigra. This Rattus norvegicus (Rat) protein is Cerebral dopamine neurotrophic factor (Cdnf).